The chain runs to 143 residues: Period circadian protein (143 aa).

Residues 25–130 (NSKPVTAPTQ…GPSLAADNSI (106 aa)) are disordered. 2 stretches are compositionally biased toward low complexity: residues 71–93 (SGNC…ITGT) and 114–126 (GGAA…SLAA).

Forms a heterodimer with timeless (TIM); the complex then translocates into the nucleus. In terms of processing, phosphorylated with a circadian rhythmicity, probably by the double-time protein (dbt). Phosphorylation could be implicated in the stability of per monomer and in the formation of heterodimer per-tim.

It localises to the nucleus. Its subcellular location is the cytoplasm. It is found in the perinuclear region. Functionally, essential for biological clock functions. Determines the period length of circadian and ultradian rhythms; an increase in PER dosage leads to shortened circadian rhythms and a decrease leads to lengthened circadian rhythms. Essential for the circadian rhythmicity of locomotor activity, eclosion behavior, and for the rhythmic component of the male courtship song that originates in the thoracic nervous system. The biological cycle depends on the rhythmic formation and nuclear localization of the TIM-PER complex. Light induces the degradation of TIM, which promotes elimination of PER. Nuclear activity of the heterodimer coordinatively regulates PER and TIM transcription through a negative feedback loop. Behaves as a negative element in circadian transcriptional loop. Does not appear to bind DNA, suggesting indirect transcriptional inhibition. The protein is Period circadian protein (per) of Drosophila picticornis (Fruit fly).